The chain runs to 487 residues: Sugar transporter ERD6-like 6 (487 aa).

N-acetylserine is present on S2. 12 helical membrane-spanning segments follow: residues 46–66 (ISVLACVLIVALGPIQFGFTC), 89–109 (VFGSLSNVGAMVGAIASGQIA), 115–135 (KGSLMIAAIPNIIGWLCISFA), 146–166 (LLEGFGVGIISYTVPVYIAEI), 178–198 (VNQLSVTIGIMLAYLLGLFVP), 201–221 (ILAVLGILPCTLLIPGLFFIP), 284–304 (LMVGIGLLVLQQLGGINGVLF), 320–340 (AATFGVGAIQVVATAISTWLV), 347–367 (LLLTISSVGMTISLVIVAAAF), 389–409 (VGVVAMVVFFSLGMGPIPWLI), 425–445 (IATLANWFFSWLITMTANLLL), and 451–471 (GTFTLYGLVCAFTVVFVTLWV).

The protein belongs to the major facilitator superfamily. Sugar transporter (TC 2.A.1.1) family.

It localises to the membrane. In terms of biological role, sugar transporter. This is Sugar transporter ERD6-like 6 from Arabidopsis thaliana (Mouse-ear cress).